The primary structure comprises 83 residues: Small ribosomal subunit protein uS17c (83 aa).

It belongs to the universal ribosomal protein uS17 family. As to quaternary structure, part of the 30S ribosomal subunit.

The protein resides in the plastid. Its subcellular location is the chloroplast. Its function is as follows. One of the primary rRNA binding proteins, it binds specifically to the 5'-end of 16S ribosomal RNA. This chain is Small ribosomal subunit protein uS17c (rps17), found in Pyropia yezoensis (Susabi-nori).